We begin with the raw amino-acid sequence, 104 residues long: Large ribosomal subunit protein uL24 (104 aa).

This sequence belongs to the universal ribosomal protein uL24 family. In terms of assembly, part of the 50S ribosomal subunit.

Its function is as follows. One of two assembly initiator proteins, it binds directly to the 5'-end of the 23S rRNA, where it nucleates assembly of the 50S subunit. In terms of biological role, one of the proteins that surrounds the polypeptide exit tunnel on the outside of the subunit. The chain is Large ribosomal subunit protein uL24 from Bartonella henselae (strain ATCC 49882 / DSM 28221 / CCUG 30454 / Houston 1) (Rochalimaea henselae).